A 505-amino-acid polypeptide reads, in one-letter code: Trans-cinnamate 4-monooxygenase (505 aa).

A helical membrane pass occupies residues 3–23 (LLLLEKSLIAVFVAVILATVI). (E)-cinnamate contacts are provided by residues 213–218 (RSRLAQ) and alanine 306. Cysteine 447 is a heme binding site.

Belongs to the cytochrome P450 family. Heme is required as a cofactor. In terms of tissue distribution, expressed in roots, leaves, stems, flowers and siliques.

The protein resides in the membrane. The enzyme catalyses (E)-cinnamate + reduced [NADPH--hemoprotein reductase] + O2 = (E)-4-coumarate + oxidized [NADPH--hemoprotein reductase] + H2O + H(+). The protein operates within phenylpropanoid metabolism; trans-4-coumarate biosynthesis; trans-4-coumarate from trans-cinnamate: step 1/1. In terms of biological role, catalyzes the first oxidative step of the phenylpropanoid pathway in higher plants by transforming trans-cinnamate into p-coumarate. The compounds formed by this pathway are essential components for lignification, pollination, and defense against ultraviolet light, predators and pathogens. The polypeptide is Trans-cinnamate 4-monooxygenase (Arabidopsis thaliana (Mouse-ear cress)).